The following is a 274-amino-acid chain: Diaminopimelate epimerase (274 aa).

Residues asparagine 11, glutamine 44, and asparagine 64 each contribute to the substrate site. The active-site Proton donor is the cysteine 73. Residues 74–75 (GN), asparagine 157, asparagine 190, and 208–209 (ER) contribute to the substrate site. The Proton acceptor role is filled by cysteine 217. 218–219 (GS) lines the substrate pocket.

The protein belongs to the diaminopimelate epimerase family. Homodimer.

The protein resides in the cytoplasm. The catalysed reaction is (2S,6S)-2,6-diaminopimelate = meso-2,6-diaminopimelate. Its pathway is amino-acid biosynthesis; L-lysine biosynthesis via DAP pathway; DL-2,6-diaminopimelate from LL-2,6-diaminopimelate: step 1/1. Catalyzes the stereoinversion of LL-2,6-diaminopimelate (L,L-DAP) to meso-diaminopimelate (meso-DAP), a precursor of L-lysine and an essential component of the bacterial peptidoglycan. The protein is Diaminopimelate epimerase of Escherichia coli O81 (strain ED1a).